The sequence spans 463 residues: Soluble pyridine nucleotide transhydrogenase (463 aa).

35–44 (EKQQAVGGNC) serves as a coordination point for FAD.

The protein belongs to the class-I pyridine nucleotide-disulfide oxidoreductase family. Requires FAD as cofactor.

The protein localises to the cytoplasm. It carries out the reaction NAD(+) + NADPH = NADH + NADP(+). Conversion of NADPH, generated by peripheral catabolic pathways, to NADH, which can enter the respiratory chain for energy generation. In Chromohalobacter salexigens (strain ATCC BAA-138 / DSM 3043 / CIP 106854 / NCIMB 13768 / 1H11), this protein is Soluble pyridine nucleotide transhydrogenase.